Reading from the N-terminus, the 342-residue chain is Serpentine receptor class r-10 (342 aa).

Over 1–11 the chain is Extracellular; sequence MTGELWLTLVD. The helical transmembrane segment at 12-32 threads the bilayer; the sequence is TADIVGFSMTFCVNIVLLFLL. The Cytoplasmic portion of the chain corresponds to 33 to 38; that stretch reads KNRGKN. A helical transmembrane segment spans residues 39–59; that stretch reads LGTYKHLMAFFSVFSIFYAII. At 60 to 92 the chain is on the extracellular side; sequence ESILRPIMHIENATFFLISRKRFNYSTRLGKIN. 2 N-linked (GlcNAc...) asparagine glycosylation sites follow: Asn71 and Asn83. Residues 93 to 113 traverse the membrane as a helical segment; sequence SAFYCACFATSFVVSGVHFVY. Topologically, residues 114 to 131 are cytoplasmic; the sequence is RFFASCKPHLLRSFNMPY. Residues 132–152 traverse the membrane as a helical segment; the sequence is LLLWPLGCSIPVMMWASVSYF. Topologically, residues 153–202 are extracellular; it reads LYPDTAFTEAAVTNVLNTHYHSIKKDNVSYIAYVYYQYDENGVRYVYLKN. N-linked (GlcNAc...) asparagine glycosylation is present at Asn179. The chain crosses the membrane as a helical span at residues 203-223; the sequence is LLGCFVHYFVMSATFVVMFIC. The Cytoplasmic portion of the chain corresponds to 224-257; the sequence is GYLTWKTMRKHKTASDRTRQLQKQLFKALVLQTL. Residues 258-278 traverse the membrane as a helical segment; it reads IPTIFMYAPTGVMFIAPFFSI. Topologically, residues 279 to 285 are extracellular; that stretch reads NLNANAN. Residues 286 to 306 traverse the membrane as a helical segment; sequence FIVFCSFLYPGLDPLILILII. The Cytoplasmic portion of the chain corresponds to 307-342; it reads RDFRQTVFKFFCLRKKNSVDESRSTTRANMSQVATH.

The protein belongs to the nematode receptor-like protein str family. As to quaternary structure, interacts with odr-4.

Its subcellular location is the cell projection. It is found in the cilium membrane. Functionally, an odorant receptor which affects chemotaxis to the volatile odorant diacetyl. Specifies AWA neuronal cell fate via the odr-7 pathway. This chain is Serpentine receptor class r-10, found in Caenorhabditis briggsae.